A 251-amino-acid chain; its full sequence is Flap endonuclease Xni (251 aa).

Residues 51–72 (EDDRSDSWRHQSLPDYKAGRSP) form a disordered region. A Mg(2+)-binding site is contributed by Asp-104. The region spanning 160-249 (VLPHQLPDYW…LSGNLQQLRL (90 aa)) is the 5'-3' exonuclease domain. Residues Leu-171, Ala-172, Pro-180, Val-182, and Ile-185 each coordinate K(+). The interval 184–189 (GIGAKT) is interaction with DNA.

The protein belongs to the Xni family. The cofactor is Mg(2+). K(+) serves as cofactor.

Has flap endonuclease activity. During DNA replication, flap endonucleases cleave the 5'-overhanging flap structure that is generated by displacement synthesis when DNA polymerase encounters the 5'-end of a downstream Okazaki fragment. The protein is Flap endonuclease Xni of Yersinia enterocolitica serotype O:8 / biotype 1B (strain NCTC 13174 / 8081).